A 460-amino-acid chain; its full sequence is Elongation factor 1-alpha-A (460 aa).

A N,N,N-trimethylglycine modification is found at glycine 2. Lysine 3 carries the post-translational modification N6,N6-dimethyllysine; alternate. Lysine 3 is subject to N6-methyllysine; alternate. In terms of domain architecture, tr-type G spans 5 to 240; sequence KGHINVVVIG…DSIEPPARPT (236 aa). Positions 14–21 are G1; it reads GHVDSGKS. Position 14–21 (14–21) interacts with GTP; the sequence is GHVDSGKS. Lysine 30 carries the N6-methyllysine modification. The interval 70–74 is G2; sequence GITID. Lysine 79 is subject to N6,N6,N6-trimethyllysine. A G3 region spans residues 91 to 94; it reads DAPG. GTP-binding positions include 91 to 95 and 153 to 156; these read DAPGH and NKMD. A G4 region spans residues 153-156; the sequence is NKMD. The tract at residues 192-194 is G5; sequence SGF. An N6,N6-dimethyllysine; alternate modification is found at lysine 316. At lysine 316 the chain carries N6-methyllysine; alternate. At lysine 390 the chain carries N6-methyllysine.

It belongs to the TRAFAC class translation factor GTPase superfamily. Classic translation factor GTPase family. EF-Tu/EF-1A subfamily.

It is found in the cytoplasm. Its function is as follows. This protein promotes the GTP-dependent binding of aminoacyl-tRNA to the A-site of ribosomes during protein biosynthesis. The sequence is that of Elongation factor 1-alpha-A (tef101) from Schizosaccharomyces pombe (strain 972 / ATCC 24843) (Fission yeast).